Consider the following 664-residue polypeptide: Threonine--tRNA ligase (664 aa).

Residues 1 to 64 (MSELLKITLP…TADAQLALVT (64 aa)) enclose the TGS domain. The segment at 250 to 559 (DHRKLGNEMD…LIEHFAGRLP (310 aa)) is catalytic. Residues cysteine 355, histidine 406, and histidine 536 each contribute to the Zn(2+) site.

Belongs to the class-II aminoacyl-tRNA synthetase family. In terms of assembly, homodimer. The cofactor is Zn(2+).

Its subcellular location is the cytoplasm. It carries out the reaction tRNA(Thr) + L-threonine + ATP = L-threonyl-tRNA(Thr) + AMP + diphosphate + H(+). Functionally, catalyzes the attachment of threonine to tRNA(Thr) in a two-step reaction: L-threonine is first activated by ATP to form Thr-AMP and then transferred to the acceptor end of tRNA(Thr). Also edits incorrectly charged L-seryl-tRNA(Thr). This is Threonine--tRNA ligase from Novosphingobium aromaticivorans (strain ATCC 700278 / DSM 12444 / CCUG 56034 / CIP 105152 / NBRC 16084 / F199).